The following is a 39-amino-acid chain: Large ribosomal subunit protein bL12 (39 aa).

The protein belongs to the bacterial ribosomal protein bL12 family. In terms of assembly, homodimer. Part of the ribosomal stalk of the 50S ribosomal subunit. Forms a multimeric L10(L12)X complex, where L10 forms an elongated spine to which 2 to 4 L12 dimers bind in a sequential fashion. Binds GTP-bound translation factors.

Forms part of the ribosomal stalk which helps the ribosome interact with GTP-bound translation factors. Is thus essential for accurate translation. The chain is Large ribosomal subunit protein bL12 (rplL) from Arthrobacter glacialis.